We begin with the raw amino-acid sequence, 181 residues long: Nedd8-conjugating enzyme UbcE2M (181 aa).

2 interaction with Uba3 regions span residues L4 to L7 and A24 to L54. One can recognise a UBC core domain in the interval A26–V170. C108 functions as the Glycyl thioester intermediate in the catalytic mechanism.

Belongs to the ubiquitin-conjugating enzyme family. UBC12 subfamily. In terms of assembly, interacts with Uba3. Expressed in the wing disk.

It catalyses the reaction [E1 NEDD8-activating enzyme]-S-[NEDD8 protein]-yl-L-cysteine + [E2 NEDD8-conjugating enzyme]-L-cysteine = [E1 NEDD8-activating enzyme]-L-cysteine + [E2 NEDD8-conjugating enzyme]-S-[NEDD8-protein]-yl-L-cysteine.. The protein operates within protein modification; protein neddylation. In terms of biological role, accepts the ubiquitin-like protein Nedd8 from the Uba3-APP-BP1 E1 complex and catalyzes its covalent attachment to other proteins. Required for Cul1 and Cul3 neddylation. Negatively regulates full-length ci stability and hedgehog signaling. The protein is Nedd8-conjugating enzyme UbcE2M of Drosophila melanogaster (Fruit fly).